The primary structure comprises 331 residues: Lipoyl synthase (331 aa).

The disordered stretch occupies residues 1 to 33; sequence MSDALIASSSEAPQSPAEQYDPTRKQKSADKTA. Residues 7–19 show a composition bias toward low complexity; sequence ASSSEAPQSPAEQ. The span at 21–33 shows a compositional bias: basic and acidic residues; that stretch reads DPTRKQKSADKTA. [4Fe-4S] cluster is bound by residues C78, C83, C89, C104, C108, C111, and S318. In terms of domain architecture, Radical SAM core spans 89-307; it reads CFGKGTATFM…EEEAYKMGFT (219 aa).

This sequence belongs to the radical SAM superfamily. Lipoyl synthase family. The cofactor is [4Fe-4S] cluster.

It is found in the cytoplasm. The catalysed reaction is [[Fe-S] cluster scaffold protein carrying a second [4Fe-4S](2+) cluster] + N(6)-octanoyl-L-lysyl-[protein] + 2 oxidized [2Fe-2S]-[ferredoxin] + 2 S-adenosyl-L-methionine + 4 H(+) = [[Fe-S] cluster scaffold protein] + N(6)-[(R)-dihydrolipoyl]-L-lysyl-[protein] + 4 Fe(3+) + 2 hydrogen sulfide + 2 5'-deoxyadenosine + 2 L-methionine + 2 reduced [2Fe-2S]-[ferredoxin]. The protein operates within protein modification; protein lipoylation via endogenous pathway; protein N(6)-(lipoyl)lysine from octanoyl-[acyl-carrier-protein]: step 2/2. Catalyzes the radical-mediated insertion of two sulfur atoms into the C-6 and C-8 positions of the octanoyl moiety bound to the lipoyl domains of lipoate-dependent enzymes, thereby converting the octanoylated domains into lipoylated derivatives. The protein is Lipoyl synthase of Cupriavidus pinatubonensis (strain JMP 134 / LMG 1197) (Cupriavidus necator (strain JMP 134)).